Reading from the N-terminus, the 232-residue chain is Ribonuclease 3 (232 aa).

The RNase III domain maps to 7–135 (IQAVESKLKF…ILGAVYLDGG (129 aa)). Glutamate 48 is a Mg(2+) binding site. Aspartate 52 is a catalytic residue. Positions 121 and 124 each coordinate Mg(2+). Glutamate 124 is an active-site residue. A DRBM domain is found at 160-229 (NPKNRLQQFT…AKQALSTHDD (70 aa)).

This sequence belongs to the ribonuclease III family. Homodimer. Mg(2+) is required as a cofactor.

The protein localises to the cytoplasm. The enzyme catalyses Endonucleolytic cleavage to 5'-phosphomonoester.. Functionally, digests double-stranded RNA. Involved in the processing of primary rRNA transcript to yield the immediate precursors to the large and small rRNAs (23S and 16S). Processes some mRNAs, and tRNAs when they are encoded in the rRNA operon. Processes pre-crRNA and tracrRNA of type II CRISPR loci if present in the organism. This is Ribonuclease 3 from Chlamydia muridarum (strain MoPn / Nigg).